The primary structure comprises 143 residues: Universal stress protein A (143 aa).

The protein belongs to the universal stress protein A family. In terms of assembly, homodimer.

It is found in the cytoplasm. In terms of biological role, required for resistance to DNA-damaging agents. The chain is Universal stress protein A (uspA) from Photorhabdus laumondii subsp. laumondii (strain DSM 15139 / CIP 105565 / TT01) (Photorhabdus luminescens subsp. laumondii).